A 935-amino-acid chain; its full sequence is Disintegrin and metalloproteinase domain-containing protein 22 (935 aa).

An N-terminal signal peptide occupies residues Met-1–Ala-24. Residues Ser-25–Arg-227 constitute a propeptide that is removed on maturation. Residues Asn-167 and Asn-210 are each glycosylated (N-linked (GlcNAc...) asparagine). Over Gln-228–Asn-736 the chain is Extracellular. Residues Lys-241–Pro-440 form the Peptidase M12B domain. 17 disulfides stabilise this stretch: Cys-351/Cys-435, Cys-394/Cys-419, Cys-396/Cys-403, Cys-449/Cys-479, Cys-460/Cys-476, Cys-462/Cys-468, Cys-475/Cys-496, Cys-487/Cys-493, Cys-492/Cys-518, Cys-505/Cys-525, Cys-512/Cys-544, Cys-537/Cys-549, Cys-556/Cys-607, Cys-571/Cys-637, Cys-585/Cys-595, Cys-602/Cys-665, and Cys-659/Cys-670. The 88-residue stretch at Pro-446 to Asp-533 folds into the Disintegrin domain. Asn-521 carries N-linked (GlcNAc...) asparagine glycosylation. Residues Asn-609 and Asn-636 are each glycosylated (N-linked (GlcNAc...) asparagine). Asn-677 is a glycosylation site (N-linked (GlcNAc...) asparagine). The EGF-like domain maps to Asn-677–Ser-713. 3 disulfide bridges follow: Cys-681/Cys-695, Cys-689/Cys-701, and Cys-703/Cys-712. Residues Ile-737–Ala-757 traverse the membrane as a helical segment. Residues Trp-758–Ile-935 lie on the Cytoplasmic side of the membrane. The interval Val-850–Ile-935 is disordered. Residues Pro-859–Ser-870 show a composition bias toward polar residues. Residues Ser-871 to Pro-882 are compositionally biased toward basic residues. Over residues Ser-891 to Ser-906 the composition is skewed to low complexity.

Post-translationally, the precursor is cleaved by a furin endopeptidase. Low levels in adult tissues. Not detected in developing embryos.

The protein resides in the cell membrane. In terms of biological role, probable ligand for integrin in the brain. This is a non catalytic metalloprotease-like protein. The polypeptide is Disintegrin and metalloproteinase domain-containing protein 22 (adam22) (Xenopus laevis (African clawed frog)).